The following is a 158-amino-acid chain: MQGRSSAWLVKHELVHRSLGFDYQGIETLQIKPEDWYSIAVISYVYGYNYLRSQCAYDVAPGGLLASVYHLTRIQYGVDQPEEVCIKVFVPRSNPRIPSVFWIWKSADFQERESYDMLGISYDNHPRMKRILMPESWVGWPLRKDYIAPNFYELQDAH.

It belongs to the complex I 30 kDa subunit family. In terms of assembly, NDH is composed of at least 16 different subunits, 5 of which are encoded in the nucleus.

It localises to the plastid. It is found in the chloroplast thylakoid membrane. It catalyses the reaction a plastoquinone + NADH + (n+1) H(+)(in) = a plastoquinol + NAD(+) + n H(+)(out). The catalysed reaction is a plastoquinone + NADPH + (n+1) H(+)(in) = a plastoquinol + NADP(+) + n H(+)(out). Functionally, NDH shuttles electrons from NAD(P)H:plastoquinone, via FMN and iron-sulfur (Fe-S) centers, to quinones in the photosynthetic chain and possibly in a chloroplast respiratory chain. The immediate electron acceptor for the enzyme in this species is believed to be plastoquinone. Couples the redox reaction to proton translocation, and thus conserves the redox energy in a proton gradient. The polypeptide is NAD(P)H-quinone oxidoreductase subunit J, chloroplastic (Nuphar advena (Common spatterdock)).